Consider the following 362-residue polypeptide: MNAALKTFAPSALALLLILPSSASAKEAETQQKLANVVILATGGTIAGAGASAANSATYQAAKLGVDKLIAGVPELADIANVRGEQVMQIASESISNDDLLKLGKRVAELAESKDVDGIVITHGTDTLEETAFFLNLVEKTDKPIVVVGSMRPGTAMSADGMLNLYNAVAVASDKQSRGKGVLVTMNDEIQSGRDVSKAVNIKTEAFKSAWGPMGMVVEGKSYWFRLPAKRHTVNSEFDIKQISSLPQVDIAYGYGNVTDTAYKALAQNGAKALIHAGTGNGSVSSRVVPALQELRKNGVQIIRSSHVNQGGFVLRNAEQPDDKNDWVVAHDLNPQKARILAMVAMTKTQDSKELQRIFWEY.

Positions 1–25 (MNAALKTFAPSALALLLILPSSASA) are cleaved as a signal peptide. One can recognise an Asparaginase/glutaminase domain in the interval 35–362 (ANVVILATGG…KELQRIFWEY (328 aa)). Residue Thr45 is the Acyl-ester intermediate of the active site. Substrate contacts are provided by residues Ser92 and 125 to 126 (TD).

Belongs to the asparaginase 1 family. As to quaternary structure, homotetramer.

The protein resides in the periplasm. The catalysed reaction is L-glutamine + H2O = L-glutamate + NH4(+). The enzyme catalyses L-asparagine + H2O = L-aspartate + NH4(+). This chain is Glutaminase-asparaginase (ansB), found in Pseudomonas putida (strain ATCC 47054 / DSM 6125 / CFBP 8728 / NCIMB 11950 / KT2440).